Reading from the N-terminus, the 298-residue chain is 3-hydroxyisobutyrate dehydrogenase (298 aa).

Residues 2–30 (TDIA…VNVF), 65–66 (LP), and threonine 96 contribute to the NAD(+) site. Lysine 171 is a catalytic residue. An NAD(+)-binding site is contributed by lysine 246.

It belongs to the HIBADH-related family.

The catalysed reaction is 3-hydroxy-2-methylpropanoate + NAD(+) = 2-methyl-3-oxopropanoate + NADH + H(+). Its pathway is amino-acid degradation; L-valine degradation. The protein is 3-hydroxyisobutyrate dehydrogenase of Pseudomonas aeruginosa (strain ATCC 15692 / DSM 22644 / CIP 104116 / JCM 14847 / LMG 12228 / 1C / PRS 101 / PAO1).